Consider the following 282-residue polypeptide: HTH-type transcriptional activator RhaR (282 aa).

The 99-residue stretch at 179–277 (DKLITALANS…GMTPSQWRHL (99 aa)) folds into the HTH araC/xylS-type domain. DNA-binding regions (H-T-H motif) lie at residues 196 to 217 (DAFC…RAQT) and 244 to 267 (ISEI…TRET).

Binds DNA as a dimer.

Its subcellular location is the cytoplasm. Activates expression of the rhaSR operon in response to L-rhamnose. This chain is HTH-type transcriptional activator RhaR, found in Salmonella arizonae (strain ATCC BAA-731 / CDC346-86 / RSK2980).